The primary structure comprises 140 residues: Cysteine protease inhibitor 6 (140 aa).

The cysteines at positions 103 and 109 are disulfide-linked.

This sequence belongs to the protease inhibitor I3 (leguminous Kunitz-type inhibitor) family.

It is found in the vacuole. Its function is as follows. Inhibitor of cysteine proteases. May protect the plant by inhibiting proteases of invading organisms. The polypeptide is Cysteine protease inhibitor 6 (Solanum tuberosum (Potato)).